The following is a 478-amino-acid chain: Argininosuccinate lyase (478 aa).

It belongs to the lyase 1 family. Argininosuccinate lyase subfamily.

The protein localises to the cytoplasm. The catalysed reaction is 2-(N(omega)-L-arginino)succinate = fumarate + L-arginine. It participates in amino-acid biosynthesis; L-arginine biosynthesis; L-arginine from L-ornithine and carbamoyl phosphate: step 3/3. This Rhodospirillum rubrum (strain ATCC 11170 / ATH 1.1.1 / DSM 467 / LMG 4362 / NCIMB 8255 / S1) protein is Argininosuccinate lyase.